The sequence spans 139 residues: ATP synthase epsilon chain (139 aa).

Belongs to the ATPase epsilon chain family. As to quaternary structure, F-type ATPases have 2 components, CF(1) - the catalytic core - and CF(0) - the membrane proton channel. CF(1) has five subunits: alpha(3), beta(3), gamma(1), delta(1), epsilon(1). CF(0) has three main subunits: a, b and c.

It is found in the cell inner membrane. Functionally, produces ATP from ADP in the presence of a proton gradient across the membrane. In Shigella boydii serotype 18 (strain CDC 3083-94 / BS512), this protein is ATP synthase epsilon chain.